The following is a 1047-amino-acid chain: Probable alpha-mannosidase At5g66150 (1047 aa).

The N-terminal stretch at 1 to 27 (MEKPGMSLLKGSLCVIVFLLLLSLVES) is a signal peptide. Zn(2+) is bound by residues His56, Asp58, and Asp178. 3 N-linked (GlcNAc...) asparagine glycosylation sites follow: Asn280, Asn287, and Asn345. Residue His419 coordinates Zn(2+). Cystine bridges form between Cys455/Cys465 and Cys476/Cys484. Asn480, Asn508, Asn541, Asn605, Asn606, Asn668, Asn780, and Asn857 each carry an N-linked (GlcNAc...) asparagine glycan. A disulfide bond links Cys855 and Cys860.

It belongs to the glycosyl hydrolase 38 family. As to quaternary structure, homodimer. Zn(2+) serves as cofactor.

It is found in the vacuole. The enzyme catalyses Hydrolysis of terminal, non-reducing alpha-D-mannose residues in alpha-D-mannosides.. Functionally, liberates mannose from p-nitrophenyl-alpha-D-mannoside in vitro. This Arabidopsis thaliana (Mouse-ear cress) protein is Probable alpha-mannosidase At5g66150.